We begin with the raw amino-acid sequence, 625 residues long: Phosphomethylpyrimidine synthase (625 aa).

Substrate-binding positions include asparagine 237, methionine 266, tyrosine 295, histidine 331, 351–353 (SRG), 392–395 (DGLR), and glutamate 431. Residue histidine 435 participates in Zn(2+) binding. Residue tyrosine 458 coordinates substrate. Histidine 499 contributes to the Zn(2+) binding site. The [4Fe-4S] cluster site is built by cysteine 579, cysteine 582, and cysteine 587.

This sequence belongs to the ThiC family. In terms of assembly, homodimer. [4Fe-4S] cluster is required as a cofactor.

It carries out the reaction 5-amino-1-(5-phospho-beta-D-ribosyl)imidazole + S-adenosyl-L-methionine = 4-amino-2-methyl-5-(phosphooxymethyl)pyrimidine + CO + 5'-deoxyadenosine + formate + L-methionine + 3 H(+). The protein operates within cofactor biosynthesis; thiamine diphosphate biosynthesis. Functionally, catalyzes the synthesis of the hydroxymethylpyrimidine phosphate (HMP-P) moiety of thiamine from aminoimidazole ribotide (AIR) in a radical S-adenosyl-L-methionine (SAM)-dependent reaction. This chain is Phosphomethylpyrimidine synthase, found in Cupriavidus metallidurans (strain ATCC 43123 / DSM 2839 / NBRC 102507 / CH34) (Ralstonia metallidurans).